The following is a 333-amino-acid chain: Phosphoribosylformylglycinamidine cyclo-ligase (333 aa).

This sequence belongs to the AIR synthase family.

It is found in the cytoplasm. The enzyme catalyses 2-formamido-N(1)-(5-O-phospho-beta-D-ribosyl)acetamidine + ATP = 5-amino-1-(5-phospho-beta-D-ribosyl)imidazole + ADP + phosphate + H(+). It participates in purine metabolism; IMP biosynthesis via de novo pathway; 5-amino-1-(5-phospho-D-ribosyl)imidazole from N(2)-formyl-N(1)-(5-phospho-D-ribosyl)glycinamide: step 2/2. This Methanosarcina barkeri (strain Fusaro / DSM 804) protein is Phosphoribosylformylglycinamidine cyclo-ligase.